The primary structure comprises 616 residues: Dihydroxy-acid dehydratase (616 aa).

Asp81 serves as a coordination point for Mg(2+). Position 122 (Cys122) interacts with [2Fe-2S] cluster. Mg(2+)-binding residues include Asp123 and Lys124. Lys124 carries the N6-carboxylysine modification. Cys195 contributes to the [2Fe-2S] cluster binding site. Glu491 is a binding site for Mg(2+). Ser517 acts as the Proton acceptor in catalysis.

The protein belongs to the IlvD/Edd family. Homodimer. [2Fe-2S] cluster is required as a cofactor. Mg(2+) serves as cofactor.

It catalyses the reaction (2R)-2,3-dihydroxy-3-methylbutanoate = 3-methyl-2-oxobutanoate + H2O. The catalysed reaction is (2R,3R)-2,3-dihydroxy-3-methylpentanoate = (S)-3-methyl-2-oxopentanoate + H2O. The protein operates within amino-acid biosynthesis; L-isoleucine biosynthesis; L-isoleucine from 2-oxobutanoate: step 3/4. It functions in the pathway amino-acid biosynthesis; L-valine biosynthesis; L-valine from pyruvate: step 3/4. Functionally, functions in the biosynthesis of branched-chain amino acids. Catalyzes the dehydration of (2R,3R)-2,3-dihydroxy-3-methylpentanoate (2,3-dihydroxy-3-methylvalerate) into 2-oxo-3-methylpentanoate (2-oxo-3-methylvalerate) and of (2R)-2,3-dihydroxy-3-methylbutanoate (2,3-dihydroxyisovalerate) into 2-oxo-3-methylbutanoate (2-oxoisovalerate), the penultimate precursor to L-isoleucine and L-valine, respectively. This is Dihydroxy-acid dehydratase from Salmonella typhi.